Consider the following 458-residue polypeptide: Pentatricopeptide repeat-containing protein At1g77405 (458 aa).

7 PPR repeats span residues 164-198 (TTASITCLMKCLGEEGFVKEALATFYRMKEYHCKP), 199-233 (DVYAYNTIINALCRVGNFKKARFLLDQMQLPGFRY), 236-271 (DTYTYTILISSYCRYGMQTGCRKAIRRRMWEANRMF), 282-316 (DVVTYNCLIDGCCKTNRIGRALELFEDMKTKGCVP), 317-351 (NQVTYNSFIRYYSVTNEIEGAIEMMRTMKKLGHGV), 353-387 (GSSTYTPLIHALVETRRAAEARDLVVEMVEAGLVP), and 388-419 (REYTYKLVCDALSSEGLASTLDEELHKRMREG).

This sequence belongs to the PPR family. P subfamily.

The sequence is that of Pentatricopeptide repeat-containing protein At1g77405 from Arabidopsis thaliana (Mouse-ear cress).